The sequence spans 281 residues: Probable feruloyl esterase A (281 aa).

Positions 1 to 21 (MKNFVSMHAILLACSAGAGLA) are cleaved as a signal peptide. 3 disulfides stabilise this stretch: Cys-50-Cys-279, Cys-112-Cys-115, and Cys-248-Cys-255. Residue Asp-98 participates in substrate binding. An N-linked (GlcNAc...) asparagine glycan is attached at Asn-100. Position 101 (Tyr-101) interacts with substrate. Ser-154 functions as the Nucleophile in the catalytic mechanism. A glycan (N-linked (GlcNAc...) asparagine) is linked at Asn-173. The Charge relay system role is filled by Asp-215. His-268 serves as a coordination point for substrate. The active-site Charge relay system is the His-268.

It belongs to the AB hydrolase superfamily. FaeA family.

Its subcellular location is the secreted. The catalysed reaction is feruloyl-polysaccharide + H2O = ferulate + polysaccharide.. In terms of biological role, involved in degradation of plant cell walls. Hydrolyzes the feruloyl-arabinose ester bond in arabinoxylans, and the feruloyl-galactose ester bond in pectin. The chain is Probable feruloyl esterase A (faeA) from Aspergillus flavus (strain ATCC 200026 / FGSC A1120 / IAM 13836 / NRRL 3357 / JCM 12722 / SRRC 167).